Here is a 99-residue protein sequence, read N- to C-terminus: Small ribosomal subunit protein bS20 (99 aa).

It belongs to the bacterial ribosomal protein bS20 family.

Binds directly to 16S ribosomal RNA. This chain is Small ribosomal subunit protein bS20, found in Cyanothece sp. (strain PCC 7425 / ATCC 29141).